The sequence spans 382 residues: tRNA(Met) cytidine acetate ligase (382 aa).

ATP is bound by residues 7 to 20 (ITEY…HVYH), G100, N153, and R178.

The protein belongs to the TmcAL family.

Its subcellular location is the cytoplasm. It carries out the reaction cytidine(34) in elongator tRNA(Met) + acetate + ATP = N(4)-acetylcytidine(34) in elongator tRNA(Met) + AMP + diphosphate. Its function is as follows. Catalyzes the formation of N(4)-acetylcytidine (ac(4)C) at the wobble position of elongator tRNA(Met), using acetate and ATP as substrates. First activates an acetate ion to form acetyladenylate (Ac-AMP) and then transfers the acetyl group to tRNA to form ac(4)C34. This is tRNA(Met) cytidine acetate ligase from Staphylococcus carnosus (strain TM300).